Consider the following 116-residue polypeptide: Putative antiporter subunit mnhC2 (116 aa).

The next 3 helical transmembrane spans lie at 3–23, 28–48, and 72–92; these read LILL…ILSL, IVIG…SMGH, and AIVL…LVLV.

Belongs to the CPA3 antiporters (TC 2.A.63) subunit C family. May form a heterooligomeric complex that consists of seven subunits: mnhA2, mnhB2, mnhC2, mnhD2, mnhE2, mnhF2 and mnhG2.

Its subcellular location is the cell membrane. This Staphylococcus haemolyticus (strain JCSC1435) protein is Putative antiporter subunit mnhC2 (mnhC2).